The primary structure comprises 118 residues: Alpha-amylase inhibitor 4 (118 aa).

4 disulfides stabilise this stretch: cysteine 7-cysteine 60, cysteine 21-cysteine 49, cysteine 30-cysteine 82, and cysteine 50-cysteine 101.

The protein belongs to the protease inhibitor I6 (cereal trypsin/alpha-amylase inhibitor) family.

Its subcellular location is the secreted. Its function is as follows. Alpha-amylase inhibitor. This chain is Alpha-amylase inhibitor 4, found in Sorghum bicolor (Sorghum).